The sequence spans 246 residues: Triosephosphate isomerase (246 aa).

9 to 11 (NWK) contributes to the substrate binding site. His-91 serves as the catalytic Electrophile. Catalysis depends on Glu-161, which acts as the Proton acceptor. Substrate is bound by residues Gly-167, Ser-206, and 227–228 (GG).

Belongs to the triosephosphate isomerase family. As to quaternary structure, homodimer.

The protein localises to the cytoplasm. It catalyses the reaction D-glyceraldehyde 3-phosphate = dihydroxyacetone phosphate. It participates in carbohydrate biosynthesis; gluconeogenesis. Its pathway is carbohydrate degradation; glycolysis; D-glyceraldehyde 3-phosphate from glycerone phosphate: step 1/1. Functionally, involved in the gluconeogenesis. Catalyzes stereospecifically the conversion of dihydroxyacetone phosphate (DHAP) to D-glyceraldehyde-3-phosphate (G3P). In Ruegeria sp. (strain TM1040) (Silicibacter sp.), this protein is Triosephosphate isomerase.